Reading from the N-terminus, the 176-residue chain is Large ribosomal subunit protein uL6 (176 aa).

The protein belongs to the universal ribosomal protein uL6 family. As to quaternary structure, part of the 50S ribosomal subunit.

Functionally, this protein binds to the 23S rRNA, and is important in its secondary structure. It is located near the subunit interface in the base of the L7/L12 stalk, and near the tRNA binding site of the peptidyltransferase center. The chain is Large ribosomal subunit protein uL6 from Methanosarcina mazei (strain ATCC BAA-159 / DSM 3647 / Goe1 / Go1 / JCM 11833 / OCM 88) (Methanosarcina frisia).